The chain runs to 546 residues: Chaperonin GroEL (546 aa).

Residues 29 to 32 (TLGP), lysine 50, 86 to 90 (DGTTT), glycine 415, and aspartate 495 each bind ATP.

The protein belongs to the chaperonin (HSP60) family. As to quaternary structure, forms a cylinder of 14 subunits composed of two heptameric rings stacked back-to-back. Interacts with the co-chaperonin GroES.

The protein localises to the cytoplasm. The catalysed reaction is ATP + H2O + a folded polypeptide = ADP + phosphate + an unfolded polypeptide.. Functionally, together with its co-chaperonin GroES, plays an essential role in assisting protein folding. The GroEL-GroES system forms a nano-cage that allows encapsulation of the non-native substrate proteins and provides a physical environment optimized to promote and accelerate protein folding. This is Chaperonin GroEL from Parabacteroides distasonis (strain ATCC 8503 / DSM 20701 / CIP 104284 / JCM 5825 / NCTC 11152).